The sequence spans 154 residues: Ribonuclease 8 (154 aa).

Positions 1–27 (MAPARAGCCPLLLLLLGLWVAQIPVSA) are cleaved as a signal peptide. The Proton acceptor role is filled by H42. Cystine bridges form between C64–C118 and C89–C96. Substrate contacts are provided by residues 65–69 (KDLNT) and K90. Residue H149 is the Proton donor of the active site.

It belongs to the pancreatic ribonuclease family.

The protein localises to the secreted. Functionally, has a low ribonuclease activity. This is Ribonuclease 8 (RNASE8) from Chlorocebus aethiops (Green monkey).